Here is a 227-residue protein sequence, read N- to C-terminus: Translation initiation factor 6 (227 aa).

This sequence belongs to the eIF-6 family.

Binds to the 50S ribosomal subunit and prevents its association with the 30S ribosomal subunit to form the 70S initiation complex. This is Translation initiation factor 6 from Methanococcus maripaludis (strain C5 / ATCC BAA-1333).